The following is a 168-amino-acid chain: ATP synthase F(1) complex subunit delta, mitochondrial (168 aa).

A mitochondrion-targeting transit peptide spans 1-22 (MLPASLLRHPGLRRLMLQARTY). N6-acetyllysine; alternate occurs at positions 136 and 165. 2 positions are modified to N6-succinyllysine; alternate: lysine 136 and lysine 165.

This sequence belongs to the ATPase epsilon chain family. Component of the ATP synthase complex composed at least of ATP5F1A/subunit alpha, ATP5F1B/subunit beta, ATP5MC1/subunit c (homooctomer), MT-ATP6/subunit a, MT-ATP8/subunit 8, ATP5ME/subunit e, ATP5MF/subunit f, ATP5MG/subunit g, ATP5MK/subunit k, ATP5MJ/subunit j, ATP5F1C/subunit gamma, ATP5F1D/subunit delta, ATP5F1E/subunit epsilon, ATP5PF/subunit F6, ATP5PB/subunit b, ATP5PD/subunit d, ATP5PO/subunit OSCP. ATP synthase complex consists of a soluble F(1) head domain (subunits alpha(3) and beta(3)) - the catalytic core - and a membrane F(0) domain - the membrane proton channel (subunits c, a, 8, e, f, g, k and j). These two domains are linked by a central stalk (subunits gamma, delta, and epsilon) rotating inside the F1 region and a stationary peripheral stalk (subunits F6, b, d, and OSCP). Component of a complex composed at least by ATPIF1, ATP5F1A, ATP5F1B, ATP5F1C AND ATP5F1E.

Its subcellular location is the mitochondrion. The protein localises to the mitochondrion inner membrane. Its function is as follows. Subunit delta, of the mitochondrial membrane ATP synthase complex (F(1)F(0) ATP synthase or Complex V) that produces ATP from ADP in the presence of a proton gradient across the membrane which is generated by electron transport complexes of the respiratory chain. ATP synthase complex consist of a soluble F(1) head domain - the catalytic core - and a membrane F(1) domain - the membrane proton channel. These two domains are linked by a central stalk rotating inside the F(1) region and a stationary peripheral stalk. During catalysis, ATP synthesis in the catalytic domain of F(1) is coupled via a rotary mechanism of the central stalk subunits to proton translocation. In vivo, can only synthesize ATP although its ATP hydrolase activity can be activated artificially in vitro. With the central stalk subunit gamma, is essential for the biogenesis of F(1) catalytic part of the ATP synthase complex namely in the formation of F1 assembly intermediate. This is ATP synthase F(1) complex subunit delta, mitochondrial from Mus musculus (Mouse).